A 184-amino-acid chain; its full sequence is Ribosome maturation factor RimM (184 aa).

A PRC barrel domain is found at 101–180; sequence DGEFFYCDLV…KITTNNAKTL (80 aa).

It belongs to the RimM family. As to quaternary structure, binds ribosomal protein uS19.

The protein resides in the cytoplasm. Functionally, an accessory protein needed during the final step in the assembly of 30S ribosomal subunit, possibly for assembly of the head region. Essential for efficient processing of 16S rRNA. May be needed both before and after RbfA during the maturation of 16S rRNA. It has affinity for free ribosomal 30S subunits but not for 70S ribosomes. This is Ribosome maturation factor RimM from Helicobacter pylori (strain Shi470).